We begin with the raw amino-acid sequence, 94 residues long: Large ribosomal subunit protein bL25 (94 aa).

It belongs to the bacterial ribosomal protein bL25 family. As to quaternary structure, part of the 50S ribosomal subunit; part of the 5S rRNA/L5/L18/L25 subcomplex. Contacts the 5S rRNA. Binds to the 5S rRNA independently of L5 and L18.

In terms of biological role, this is one of the proteins that binds to the 5S RNA in the ribosome where it forms part of the central protuberance. This is Large ribosomal subunit protein bL25 from Pectobacterium atrosepticum (strain SCRI 1043 / ATCC BAA-672) (Erwinia carotovora subsp. atroseptica).